A 203-amino-acid chain; its full sequence is Putative B3 domain-containing protein At1g50220 (203 aa).

The segment at residues 99–195 is a DNA-binding region (TF-B3); the sequence is DIVGNVALPK…KFIVLNFQHK (97 aa).

It is found in the nucleus. The polypeptide is Putative B3 domain-containing protein At1g50220 (Arabidopsis thaliana (Mouse-ear cress)).